Consider the following 571-residue polypeptide: MDRAVSRVVLENEEREAKNTWRFVFRIAVLLLIVMTLAISAAALVYSMGASTPRDLASISTAISKMEDKITSSLSSNQDVVDRIYKQVALESPLALLNTESIIMNAITSLSYQINGAANNSGCGAPVHDPDYIGGIGKELIVDDTSDVTSFYPSAYQEHLNFIPAPTTGSGCTRIPSFDMSATHYCYTHNVILSGCRDHSHSHQYLALGVLRTSATGKVFFSTLRSINLDDTQNRKSCSVSATPLGCDMLCSKVTETEEEDYKSVTPTSMVHGRFRFDGQYHEKDSDRTTLFKDWVANYPGVGGGSFIDDRVWFPIYGGLKPNSPSDIAQEGKYVIYKRYNNTFPDKQDYQIRMAKSSYKPGRFGGKRVQQAILSIKVSTSLGEDPVLTVPPNTITLMGAEGRVLTVGTSHFLYQRGSSYFSPALLYPMTVYQQTATLHSPYTFNAFTRPGSVPCQASARCPNSCITGVYTDPYPLVFHRNHTLRGVFGTMLDDEQARLNPVSAVFDNISRSRVTRVSSSSTKAAYTTSTCFKVVKTSKAYCLSIAEISNTLFGEFRIVPLLVEILKDDRV.

Over 1–26 (MDRAVSRVVLENEEREAKNTWRFVFR) the chain is Intravirion. A helical transmembrane segment spans residues 27–47 (IAVLLLIVMTLAISAAALVYS). Over 48–571 (MGASTPRDLA…LVEILKDDRV (524 aa)) the chain is Virion surface. A glycan (N-linked (GlcNAc...) asparagine; by host) is linked at Asn-119. Residues 124–152 (GAPVHDPDYIGGIGKELIVDDTSDVTSFY) are important for interaction with fusion/F protein. Intrachain disulfides connect Cys-172/Cys-196, Cys-186/Cys-247, and Cys-238/Cys-251. Residues 234–239 (NRKSCS) are involved in neuraminidase activity. Residue Asn-341 is glycosylated (N-linked (GlcNAc...) asparagine; by host). Residues Cys-455 and Cys-465 are joined by a disulfide bond. N-linked (GlcNAc...) asparagine; by host glycosylation is found at Asn-481 and Asn-508. Cysteines 531 and 542 form a disulfide.

This sequence belongs to the paramyxoviruses hemagglutinin-neuraminidase family. As to quaternary structure, homotetramer; composed of disulfide-linked homodimers. Interacts with F protein trimer. Interacts with host CG-1B; this interaction inhibits viral adsorption and replication rather than internalization.

It localises to the virion membrane. It is found in the host cell membrane. It catalyses the reaction Hydrolysis of alpha-(2-&gt;3)-, alpha-(2-&gt;6)-, alpha-(2-&gt;8)- glycosidic linkages of terminal sialic acid residues in oligosaccharides, glycoproteins, glycolipids, colominic acid and synthetic substrates.. Its function is as follows. Mediates the viral entry into the host cell together with fusion/F protein. Attaches the virus to sialic acid-containing cell receptors and thereby initiates infection. Binding of HN protein to the receptor induces a conformational change that allows the F protein to trigger virion/cell membranes fusion. Functionally, neuraminidase activity ensures the efficient spread of the virus by dissociating the mature virions from the neuraminic acid containing glycoproteins. This Newcastle disease virus (strain Iba/85) (NDV) protein is Hemagglutinin-neuraminidase (HN).